Here is a 61-residue protein sequence, read N- to C-terminus: Beta-defensin 133 (61 aa).

Positions 1–23 (MKIHVFLFVLFFFLVPIATRVKC) are cleaved as a signal peptide. 2 disulfides stabilise this stretch: cysteine 31–cysteine 59 and cysteine 38–cysteine 52.

The protein belongs to the beta-defensin family.

It is found in the secreted. Has antibacterial activity. This chain is Beta-defensin 133 (DEFB133), found in Homo sapiens (Human).